Here is a 289-residue protein sequence, read N- to C-terminus: Dihydropteroate synthase (289 aa).

Residues 28–282 (TYVMGILNTT…DVEAMAQICK (255 aa)) enclose the Pterin-binding domain. Asn35 contacts Mg(2+). Residues Thr75, Asp109, Asn128, Asp199, Lys235, and 270-272 (RVH) each bind (7,8-dihydropterin-6-yl)methyl diphosphate.

The protein belongs to the DHPS family. It depends on Mg(2+) as a cofactor.

The catalysed reaction is (7,8-dihydropterin-6-yl)methyl diphosphate + 4-aminobenzoate = 7,8-dihydropteroate + diphosphate. Its pathway is cofactor biosynthesis; tetrahydrofolate biosynthesis; 7,8-dihydrofolate from 2-amino-4-hydroxy-6-hydroxymethyl-7,8-dihydropteridine diphosphate and 4-aminobenzoate: step 1/2. Catalyzes the condensation of para-aminobenzoate (pABA) with 6-hydroxymethyl-7,8-dihydropterin diphosphate (DHPt-PP) to form 7,8-dihydropteroate (H2Pte), the immediate precursor of folate derivatives. The protein is Dihydropteroate synthase (folP) of Synechocystis sp. (strain ATCC 27184 / PCC 6803 / Kazusa).